A 400-amino-acid chain; its full sequence is ELAV-like protein 4 (400 aa).

Residues 12-48 are disordered; sequence TMEPQVSNGPTSNTSNGPSSNSRNCPSPMQTGAATDD. A compositionally biased stretch (low complexity) spans 18–33; that stretch reads SNGPTSNTSNGPSSNS. Positions 34 to 44 are enriched in polar residues; the sequence is RNCPSPMQTGA. 3 consecutive RRM domains span residues 51–158, 166–246, and 317–395; these read TNLI…YARP, ANLY…FANN, and WCIF…FKTN.

It belongs to the RRM elav family.

The protein localises to the cytoplasm. It is found in the perikaryon. Its subcellular location is the cell projection. It localises to the axon. The protein resides in the dendrite. The protein localises to the growth cone. RNA-binding protein that is involved in the post-transcriptional regulation of mRNAs. Plays a role in the regulation of mRNA stability, alternative splicing and translation. Binds to AU-rich element (ARE) sequences in the 3' untranslated region (3'UTR) of target mRNAs. Mainly plays a role in neuron-specific RNA processing. The protein is ELAV-like protein 4 (elavl4) of Xenopus tropicalis (Western clawed frog).